The chain runs to 78 residues: D-alanyl carrier protein (78 aa).

The Carrier domain maps to 1–78 (MDVENTVVEI…KIIAKAKELQ (78 aa)). At Ser36 the chain carries O-(pantetheine 4'-phosphoryl)serine.

Belongs to the DltC family. 4'-phosphopantetheine is transferred from CoA to a specific serine of apo-DCP.

The protein resides in the cytoplasm. It participates in cell wall biogenesis; lipoteichoic acid biosynthesis. Functionally, carrier protein involved in the D-alanylation of lipoteichoic acid (LTA). The loading of thioester-linked D-alanine onto DltC is catalyzed by D-alanine--D-alanyl carrier protein ligase DltA. The DltC-carried D-alanyl group is further transferred to cell membrane phosphatidylglycerol (PG) by forming an ester bond, probably catalyzed by DltD. D-alanylation of LTA plays an important role in modulating the properties of the cell wall in Gram-positive bacteria, influencing the net charge of the cell wall. The polypeptide is D-alanyl carrier protein (Latilactobacillus sakei subsp. sakei (strain 23K) (Lactobacillus sakei subsp. sakei)).